A 691-amino-acid polypeptide reads, in one-letter code: Kinetochore protein NDC80 (691 aa).

The segment at 1–95 (MQSSTSTDQH…LNDKSNSRNS (95 aa)) is disordered. The span at 10–19 (HVLHHMDPHR) shows a compositional bias: basic and acidic residues. Over residues 20 to 42 (FTSQIPTATSSQLRRRNSTNQGL) the composition is skewed to polar residues. Residue Thr-38 is modified to Phosphothreonine. Over residues 54–65 (TISGTGIPTGGI) the composition is skewed to low complexity. Thr-248 carries the phosphothreonine modification. 2 coiled-coil regions span residues 376–446 (GKLE…SIKS) and 522–686 (KKSI…FETE).

Belongs to the NDC80/HEC1 family. Component of the NDC80 complex, which consists of NDC80, NUF2, SPC24 and SPC25. The NDC80 complex is formed by two subcomplexes, NDC80-NUF2 and SPC24-SPC25, which are joined end-to-end through their coiled-coil domains. It has a rod-like structure with a length of 570 Angstroms and globular domains at either end. The NDC80-NUF2 globular domains are probably directed to microtubules, the SPC24-SPC25 globular domains to the centromere. NDC80 probably interacts with SMC1 and SMC2. Also interacts with KIN3. Interacts with DMC1.

The protein localises to the nucleus. It is found in the chromosome. The protein resides in the centromere. It localises to the kinetochore. Functionally, acts as a component of the essential kinetochore-associated NDC80 complex, which is involved in chromosome segregation and spindle checkpoint activity. In Saccharomyces cerevisiae (strain ATCC 204508 / S288c) (Baker's yeast), this protein is Kinetochore protein NDC80.